The chain runs to 214 residues: A-type ATP synthase subunit D (214 aa).

The protein belongs to the V-ATPase D subunit family. In terms of assembly, has multiple subunits with at least A(3), B(3), C, D, E, F, H, I and proteolipid K(x).

Its subcellular location is the cell membrane. Its function is as follows. Component of the A-type ATP synthase that produces ATP from ADP in the presence of a proton gradient across the membrane. The sequence is that of A-type ATP synthase subunit D from Pyrococcus horikoshii (strain ATCC 700860 / DSM 12428 / JCM 9974 / NBRC 100139 / OT-3).